The following is a 468-amino-acid chain: Asparagine--tRNA ligase (468 aa).

It belongs to the class-II aminoacyl-tRNA synthetase family. Homodimer.

It is found in the cytoplasm. It carries out the reaction tRNA(Asn) + L-asparagine + ATP = L-asparaginyl-tRNA(Asn) + AMP + diphosphate + H(+). The sequence is that of Asparagine--tRNA ligase from Parabacteroides distasonis (strain ATCC 8503 / DSM 20701 / CIP 104284 / JCM 5825 / NCTC 11152).